Here is a 59-residue protein sequence, read N- to C-terminus: Large ribosomal subunit protein bL32 (59 aa).

Residues 1 to 16 show a composition bias toward basic residues; that stretch reads MAVPKRKTSPSRRGMR. The segment at 1-59 is disordered; that stretch reads MAVPKRKTSPSRRGMRRSADALKAPTYVEDKNSGELRRPHHIDLKSGMYRGRQVLEPKE. The segment covering 28–44 has biased composition (basic and acidic residues); the sequence is VEDKNSGELRRPHHIDL.

It belongs to the bacterial ribosomal protein bL32 family.

The protein is Large ribosomal subunit protein bL32 of Brucella abortus (strain S19).